Consider the following 34-residue polypeptide: Photosystem II reaction center protein Y (34 aa).

Residues 1 to 5 (DWRVL) are Lumenal-facing. Residues 6–22 (VVLLPVLLAAGWAVRNI) traverse the membrane as a helical segment. The Cytoplasmic segment spans residues 23 to 34 (LPYAVKQVQKLL).

The protein belongs to the PsbY family. As to quaternary structure, PSII is composed of 1 copy each of membrane proteins PsbA, PsbB, PsbC, PsbD, PsbE, PsbF, PsbH, PsbI, PsbJ, PsbK, PsbL, PsbM, PsbT, PsbX, PsbY, PsbZ, Psb30/Ycf12, peripheral proteins PsbO, CyanoQ (PsbQ), PsbU, PsbV and a large number of cofactors. It forms dimeric complexes. This protein is only loosely associated with PSII, and is not often found in crystals. PSII binds multiple chlorophylls, carotenoids and specific lipids. serves as cofactor.

It localises to the cellular thylakoid membrane. Its function is as follows. Loosely associated component of the core of photosystem II (PSII). PSII is a light-driven water plastoquinone oxidoreductase, using light energy to abstract electrons from H(2)O, generating a proton gradient subsequently used for ATP formation. This is Photosystem II reaction center protein Y from Thermostichus vulcanus (Synechococcus vulcanus).